Reading from the N-terminus, the 313-residue chain is Sideroflexin-4 (313 aa).

The next 5 helical transmembrane spans lie at 87–107, 141–161, 175–191, 230–247, and 269–289; these read AALLPFTAPTLFLSMLPVKSL, LLLGAGVIVSSTFLGLFPRLL, FIPVIILAQLSGMNVIA, VVLFGTSAFIPEVFAYFF, and VLVMGLMVPVSFSVFPQIGRI.

It belongs to the sideroflexin family.

The protein resides in the mitochondrion inner membrane. Its function is as follows. Mitochondrial amino-acid transporter. Does not act as a serine transporter: not able to mediate transport of serine into mitochondria. In Bos taurus (Bovine), this protein is Sideroflexin-4.